Consider the following 102-residue polypeptide: Small ribosomal subunit protein uS10 (102 aa).

It belongs to the universal ribosomal protein uS10 family. In terms of assembly, part of the 30S ribosomal subunit.

Involved in the binding of tRNA to the ribosomes. The protein is Small ribosomal subunit protein uS10 of Rhodospirillum rubrum (strain ATCC 11170 / ATH 1.1.1 / DSM 467 / LMG 4362 / NCIMB 8255 / S1).